A 60-amino-acid chain; its full sequence is Large ribosomal subunit protein bL32 (60 aa).

The protein belongs to the bacterial ribosomal protein bL32 family.

The sequence is that of Large ribosomal subunit protein bL32 from Geobacter sulfurreducens (strain ATCC 51573 / DSM 12127 / PCA).